Consider the following 33-residue polypeptide: Mu-theraphotoxin-Osp1a (33 aa).

3 cysteine pairs are disulfide-bonded: C2/C17, C9/C22, and C16/C29.

Belongs to the neurotoxin 10 (Hwtx-1) family. Expressed by the venom gland.

It is found in the secreted. Voltage-gated sodium channel Nav1.7/SCN9A inhibitor. In Orphnaecus sp. (strain Sibaliw/Philippines) (Tarantula spider), this protein is Mu-theraphotoxin-Osp1a.